We begin with the raw amino-acid sequence, 238 residues long: tRNA (guanine-N(7)-)-methyltransferase (238 aa).

The S-adenosyl-L-methionine site is built by glutamate 68, glutamate 93, aspartate 120, and aspartate 143. Residue aspartate 143 is part of the active site. Substrate contacts are provided by residues lysine 147, aspartate 179, and 216–219; that span reads TKFE.

Belongs to the class I-like SAM-binding methyltransferase superfamily. TrmB family.

It catalyses the reaction guanosine(46) in tRNA + S-adenosyl-L-methionine = N(7)-methylguanosine(46) in tRNA + S-adenosyl-L-homocysteine. The protein operates within tRNA modification; N(7)-methylguanine-tRNA biosynthesis. In terms of biological role, catalyzes the formation of N(7)-methylguanine at position 46 (m7G46) in tRNA. In Shewanella oneidensis (strain ATCC 700550 / JCM 31522 / CIP 106686 / LMG 19005 / NCIMB 14063 / MR-1), this protein is tRNA (guanine-N(7)-)-methyltransferase.